A 258-amino-acid polypeptide reads, in one-letter code: Probable N-acetylglucosaminyl-phosphatidylinositol de-N-acetylase (258 aa).

Residues 147 to 170 (KSSSTTTTSTTSSSSSSSSLSNRT) are disordered. The span at 148 to 170 (SSSTTTTSTTSSSSSSSSLSNRT) shows a compositional bias: low complexity.

Belongs to the PIGL family.

It localises to the endoplasmic reticulum membrane. The enzyme catalyses a 6-(N-acetyl-alpha-D-glucosaminyl)-1-(1,2-diacyl-sn-glycero-3-phospho)-1D-myo-inositol + H2O = a 6-(alpha-D-glucosaminyl)-1-(1,2-diacyl-sn-glycero-3-phospho)-1D-myo-inositol + acetate. Its pathway is glycolipid biosynthesis; glycosylphosphatidylinositol-anchor biosynthesis. Involved in the second step of GPI biosynthesis. De-N-acetylation of N-acetylglucosaminyl-phosphatidylinositol. In Dictyostelium discoideum (Social amoeba), this protein is Probable N-acetylglucosaminyl-phosphatidylinositol de-N-acetylase (pigl).